The chain runs to 515 residues: Germ cell-less protein-like 1 (515 aa).

A disordered region spans residues Met1 to Gly35. The span at Gln11 to Ala29 shows a compositional bias: low complexity. Residues Ser49 to Ser55 carry the Nuclear localization signal motif. A disordered region spans residues Asp65–Pro85. Phosphoserine is present on Ser66. Residues Glu67–Asp76 are compositionally biased toward acidic residues. The residue at position 68 (Thr68) is a Phosphothreonine. Residues Pro85–Lys91 carry the Nuclear localization signal motif. The BTB domain occupies Ser108–Pro178.

As to quaternary structure, interacts with TMPO-beta, TSG101 and TFDP2. Interacts with EMD.

Its subcellular location is the nucleus matrix. Its function is as follows. Possible function in spermatogenesis. Enhances the degradation of MDM2 and increases the amount of p53 probably by modulating the nucleocytoplasmic transport. This chain is Germ cell-less protein-like 1 (GMCL1), found in Homo sapiens (Human).